The sequence spans 650 residues: Acetyl-coenzyme A synthetase (650 aa).

Residues 191–194, Thr311, and Asn335 contribute to the CoA site; that span reads RGGR. ATP contacts are provided by residues 387-389, 411-416, Asp500, and Arg515; these read GEP and DTWWQT. Ser523 provides a ligand contact to CoA. ATP is bound at residue Arg526. Positions 537, 539, and 542 each coordinate Mg(2+). Residue Arg584 participates in CoA binding. Lys609 bears the N6-acetyllysine mark.

The protein belongs to the ATP-dependent AMP-binding enzyme family. It depends on Mg(2+) as a cofactor. Post-translationally, acetylated. Deacetylation by the SIR2-homolog deacetylase activates the enzyme.

The catalysed reaction is acetate + ATP + CoA = acetyl-CoA + AMP + diphosphate. Functionally, catalyzes the conversion of acetate into acetyl-CoA (AcCoA), an essential intermediate at the junction of anabolic and catabolic pathways. AcsA undergoes a two-step reaction. In the first half reaction, AcsA combines acetate with ATP to form acetyl-adenylate (AcAMP) intermediate. In the second half reaction, it can then transfer the acetyl group from AcAMP to the sulfhydryl group of CoA, forming the product AcCoA. This Shewanella sp. (strain ANA-3) protein is Acetyl-coenzyme A synthetase.